Reading from the N-terminus, the 890-residue chain is Phosphatidate phosphatase LPIN1 (890 aa).

Positions 1-108 (MNYVGQLAGQ…IPMHLATSPI (108 aa)) are N-LIP. Phosphoserine is present on residues S106 and S150. Disordered stretches follow at residues 125 to 183 (VDRM…DMFP), 228 to 300 (SYPN…SSRK), 365 to 392 (KPPS…SRHL), and 421 to 456 (SGLA…STSD). Basic residues predominate over residues 152–161 (VKKRRKRRRK). A Nuclear localization signal motif is present at residues 153–158 (KKRRKR). Composition is skewed to basic and acidic residues over residues 162–172 (SQLDSLKRDDN) and 252–265 (SDSE…ERTG). Residues S252, S254, and S260 each carry the phosphoserine modification. The residue at position 264 (T264) is a Phosphothreonine. S294 is modified (phosphoserine). K425 bears the N6-acetyllysine mark. Positions 431-440 (GARSANQSPQ) are enriched in polar residues. Phosphoserine is present on residues S434, S438, and S449. The span at 441–456 (SVGSSGVDSGVESTSD) shows a compositional bias: low complexity. Residue K565 forms a Glycyl lysine isopeptide (Lys-Gly) (interchain with G-Cter in SUMO) linkage. Positions 566–616 (EESKPEQCLAGKAHSTGEQPPQLSLATRVKHESSSSDEERAAAKPSNAGHL) are disordered. The span at 581-590 (TGEQPPQLSL) shows a compositional bias: polar residues. Residues 594–607 (VKHESSSSDEERAA) are compositionally biased toward basic and acidic residues. Position 595 is an N6-acetyllysine (K595). Residue K595 forms a Glycyl lysine isopeptide (Lys-Gly) (interchain with G-Cter in SUMO) linkage. Phosphoserine is present on residues S600 and S601. The segment at 624–830 (YKKTLRLTSE…VNPKGELVQE (207 aa)) is C-LIP. Residues 678–682 (DIDGT) carry the DXDXT motif motif. Positions 689-693 (LGHIL) match the LXXIL motif motif. S887 and S889 each carry phosphoserine.

The protein belongs to the lipin family. Interacts (via LXXIL motif) with PPARA. Interacts with PPARGC1A. Interaction with PPARA and PPARGC1A leads to the formation of a complex that modulates gene transcription. Interacts with MEF2C. It depends on Mg(2+) as a cofactor. Mn(2+) serves as cofactor. Phosphorylated at multiple sites by mTOR in response to insulin, leading to its inactivation. Phosphorylation does not affect the catalytic activity but regulates the localization. Phosphorylation is decreased by epinephrine. Dephosphorylated by the CTDNEP1-CNEP1R1 complex. Dephosphorylation following mTOR inhibition promotes its activity. In terms of processing, acetylation at Lys-425 and Lys-595 by KAT5 in response to fatty acids promotes translocation to the endoplasmic reticulum and synthesis of diacylglycerol. Post-translationally, sumoylated. In terms of tissue distribution, specifically expressed in skeletal muscle. Also abundant in adipose tissue. Lower levels in some portions of the digestive tract.

The protein localises to the cytoplasm. It is found in the cytosol. It localises to the endoplasmic reticulum membrane. Its subcellular location is the nucleus membrane. The catalysed reaction is a 1,2-diacyl-sn-glycero-3-phosphate + H2O = a 1,2-diacyl-sn-glycerol + phosphate. The enzyme catalyses 1-octadecanoyl-2-(4Z,7Z,10Z,13Z,16Z,19Z-docosahexaenoyl)-sn-glycero-3-phosphate + H2O = 1-octadecanoyl-2-(4Z,7Z,10Z,13Z,16Z,19Z-docosahexaenoyl)-sn-glycerol + phosphate. It catalyses the reaction 1-octadecanoyl-2-(5Z,8Z,11Z,14Z-eicosatetraenoyl)-sn-glycero-3-phosphate + H2O = 1-octadecanoyl-2-(5Z,8Z,11Z,14Z-eicosatetraenoyl)-sn-glycerol + phosphate. It carries out the reaction 1-octadecanoyl-2-(9Z,12Z-octadecadienoyl)-sn-glycero-3-phosphate + H2O = 1-octadecanoyl-2-(9Z,12Z)-octadecadienoyl-sn-glycerol + phosphate. The catalysed reaction is 1-octadecanoyl-2-(9Z-octadecenoyl)-sn-glycero-3-phosphate + H2O = 1-octadecanoyl-2-(9Z-octadecenoyl)-sn-glycerol + phosphate. The enzyme catalyses 1-hexadecanoyl-2-(4Z,7Z,10Z,13Z,16Z,19Z-docosahexaenoyl)-sn-glycero-3-phosphate + H2O = 1-hexadecanoyl-2-(4Z,7Z,10Z,13Z,16Z,19Z-docosahexaenoyl)-sn-glycerol + phosphate. It catalyses the reaction 1,2-dioctadecanoyl-sn-glycero-3-phosphate + H2O = 1,2-dioctadecanoyl-sn-glycerol + phosphate. It carries out the reaction 1-hexadecanoyl-2-(5Z,8Z,11Z,14Z-eicosatetraenoyl)-sn-glycero-3-phosphate + H2O = 1-hexadecanoyl-2-(5Z,8Z,11Z,14Z-eicosatetraenoyl)-sn-glycerol + phosphate. The catalysed reaction is 1-hexadecanoyl-2-(9Z,12Z-octadecadienoyl)-sn-glycero-3-phosphate + H2O = 1-hexadecanoyl-2-(9Z,12Z-octadecadienoyl)-sn-glycerol + phosphate. The enzyme catalyses 1-hexadecanoyl-2-(9Z-octadecenoyl)-sn-glycero-3-phosphate + H2O = 1-hexadecanoyl-2-(9Z-octadecenoyl)-sn-glycerol + phosphate. It catalyses the reaction 1,2-di-(4Z,7Z,10Z,13Z,16Z,19Z-docosahexaenoyl)-sn-glycero-3-phosphate + H2O = 1,2-di-(4Z,7Z,10Z,13Z,16Z,19Z-docosahexaenoyl)-sn-glycerol + phosphate. It carries out the reaction 1,2-di-(5Z,8Z,11Z,14Z)-eicosatetraenoyl-sn-glycero-3-phosphate + H2O = 1,2-di-(5Z,8Z,11Z,14Z)-eicosatetraenoyl-sn-glycerol + phosphate. The catalysed reaction is 1,2-di-(9Z,12Z-octadecadienoyl)-sn-glycero-3-phosphate + H2O = 1,2-di-(9Z,12Z-octadecadienoyl)-sn-glycerol + phosphate. The enzyme catalyses 1,2-di-(9Z-octadecenoyl)-sn-glycero-3-phosphate + H2O = 1,2-di-(9Z-octadecenoyl)-sn-glycerol + phosphate. It catalyses the reaction 1,2-dihexadecanoyl-sn-glycero-3-phosphate + H2O = 1,2-dihexadecanoyl-sn-glycerol + phosphate. Its activity is regulated as follows. Potently inhibited by sphingolipids, in particular, the sphingoid bases sphinganine and sphingosine and ceramide-1-phosphate. Inhibited by concentrations of Mg(2+) and Mn(2+) above their optimums and by Ca(2+), Zn(2+), N-ethylmaleimide and propranolol. With respect to regulation, sertraline and propanolol inhibit activity in dose-dependent manners with IC(50) values of 103 uM and 226 uM, respectively. Sertraline and propanolol inhibit activity in dose-dependent manners with IC(50) values of 108 uM and 271 uM, respectively. Its activity is regulated as follows. Sertraline and propanolol inhibit activity in dose-dependent manners with IC(50) values of 143 uM and 227 uM, respectively. Its function is as follows. Acts as a magnesium-dependent phosphatidate phosphatase enzyme which catalyzes the conversion of phosphatidic acid to diacylglycerol during triglyceride, phosphatidylcholine and phosphatidylethanolamine biosynthesis and therefore controls the metabolism of fatty acids at different levels. Is involved in adipocyte differentiation. Recruited at the mitochondrion outer membrane and is involved in mitochondrial fission by converting phosphatidic acid to diacylglycerol. Acts also as nuclear transcriptional coactivator for PPARGC1A/PPARA regulatory pathway to modulate lipid metabolism gene expression. The polypeptide is Phosphatidate phosphatase LPIN1 (Homo sapiens (Human)).